The primary structure comprises 919 residues: Probable dipeptidyl-aminopeptidase B (919 aa).

The disordered stretch occupies residues 1-89 (MGANSRVNDD…DGYVPSGGKP (89 aa)). Residues 1–95 (MGANSRVNDD…GGKPAQRRTR (95 aa)) are Cytoplasmic-facing. Residues 27-38 (DSSSTASISLTL) are compositionally biased toward low complexity. The segment covering 44-55 (HTATEPSKSTNG) has biased composition (polar residues). The chain crosses the membrane as a helical; Signal-anchor for type II membrane protein span at residues 96 to 116 (IVFWLLVALCVGGWAMAFIIM). Over 117–919 (ATSPNNRHST…RVIRRLLHFG (803 aa)) the chain is Vacuolar. The interval 121–150 (NNRHSTSDSSSGGSESEIVKPNTPHDGKKI) is disordered. Over residues 127–136 (SDSSSGGSES) the composition is skewed to low complexity. Residues Asn-207, Asn-303, Asn-355, Asn-577, and Asn-665 are each glycosylated (N-linked (GlcNAc...) asparagine). Ser-760 functions as the Charge relay system in the catalytic mechanism. Residues Asn-814 and Asn-819 are each glycosylated (N-linked (GlcNAc...) asparagine). Catalysis depends on charge relay system residues Asp-837 and His-870.

Belongs to the peptidase S9B family.

Its subcellular location is the vacuole membrane. It catalyses the reaction Release of an N-terminal dipeptide, Xaa-Yaa-|-Zaa-, from a polypeptide, preferentially when Yaa is Pro, provided Zaa is neither Pro nor hydroxyproline.. In terms of biological role, type IV dipeptidyl-peptidase which removes N-terminal dipeptides sequentially from polypeptides having unsubstituted N-termini provided that the penultimate residue is proline. The chain is Probable dipeptidyl-aminopeptidase B (DAPB) from Arthroderma otae (strain ATCC MYA-4605 / CBS 113480) (Microsporum canis).